The following is a 741-amino-acid chain: uncharacterized protein (741 aa).

Positions 1-18 (MKTISILAFLVLARLIEA) are cleaved as a signal peptide. Disordered stretches follow at residues 142–300 (PKVE…GNVD), 423–528 (EEDE…SEQG), and 646–681 (ETVA…VEDD). A compositionally biased stretch (acidic residues) spans 147–165 (EEEEEEYDGEEDDDDESLT). 2 stretches are compositionally biased toward low complexity: residues 183–197 (VEPS…STTE) and 205–266 (STTV…SSTT). Residues N232 and N241 are each glycosylated (N-linked (GlcNAc...) asparagine). Over residues 423–432 (EEDEIDETET) the composition is skewed to acidic residues. A compositionally biased stretch (low complexity) spans 433–451 (TESTKTTETTKTTGPAETT). N461 and N511 each carry an N-linked (GlcNAc...) asparagine glycan. Residues 500–511 (PIDESTESEEPN) are compositionally biased toward acidic residues. Positions 512–528 (ESVTVTGDTTTDTSEQG) are enriched in low complexity. The span at 646-656 (ETVAPDTNSPD) shows a compositional bias: polar residues. Acidic residues predominate over residues 657–671 (ADQEQPDSVEPDNET). N669 carries N-linked (GlcNAc...) asparagine glycosylation. A lipid anchor (GPI-anchor amidated asparagine) is attached at N719. The propeptide at 720-741 (AANLAGSISLSSGVLLLILMLI) is removed in mature form.

The protein resides in the cell membrane. This is an uncharacterized protein from Candida albicans (strain SC5314 / ATCC MYA-2876) (Yeast).